A 444-amino-acid polypeptide reads, in one-letter code: Methylenetetrahydrofolate--tRNA-(uracil-5-)-methyltransferase TrmFO (444 aa).

10–15 (GAGLAG) serves as a coordination point for FAD.

Belongs to the MnmG family. TrmFO subfamily. FAD is required as a cofactor.

The protein resides in the cytoplasm. It catalyses the reaction uridine(54) in tRNA + (6R)-5,10-methylene-5,6,7,8-tetrahydrofolate + NADH + H(+) = 5-methyluridine(54) in tRNA + (6S)-5,6,7,8-tetrahydrofolate + NAD(+). It carries out the reaction uridine(54) in tRNA + (6R)-5,10-methylene-5,6,7,8-tetrahydrofolate + NADPH + H(+) = 5-methyluridine(54) in tRNA + (6S)-5,6,7,8-tetrahydrofolate + NADP(+). Its function is as follows. Catalyzes the folate-dependent formation of 5-methyl-uridine at position 54 (M-5-U54) in all tRNAs. In Streptococcus equi subsp. equi (strain 4047), this protein is Methylenetetrahydrofolate--tRNA-(uracil-5-)-methyltransferase TrmFO.